Here is a 147-residue protein sequence, read N- to C-terminus: Transcriptional repressor NrdR (147 aa).

A zinc finger spans residues 3 to 34 (CPFCGHEDTQVAETRESDEGDVIRRRRRCPSC). The ATP-cone domain maps to 49–139 (PAIVKKDGSR…VYRSFEGVDE (91 aa)).

It belongs to the NrdR family. Requires Zn(2+) as cofactor.

Negatively regulates transcription of bacterial ribonucleotide reductase nrd genes and operons by binding to NrdR-boxes. The protein is Transcriptional repressor NrdR of Methylibium petroleiphilum (strain ATCC BAA-1232 / LMG 22953 / PM1).